Consider the following 273-residue polypeptide: Putative expansin-B2 (273 aa).

Residues 1-29 form the signal peptide; that stretch reads MTILVVDRYYMLMNLLFALTCLLLNLTHC. Asn36 carries N-linked (GlcNAc...) asparagine glycosylation. One can recognise an Expansin-like EG45 domain in the interval 65–173; it reads GGACGYGNAV…KKVECNYIGK (109 aa). Disulfide bonds link Cys68–Cys97, Cys100–Cys168, and Cys105–Cys111. An Expansin-like CBD domain is found at 186–269; sequence NSFAVLVAYV…NWQPGAIYKS (84 aa).

Belongs to the expansin family. Expansin B subfamily.

The protein resides in the secreted. The protein localises to the cell wall. Its subcellular location is the membrane. In terms of biological role, may cause loosening and extension of plant cell walls by disrupting non-covalent bonding between cellulose microfibrils and matrix glucans. No enzymatic activity has been found. In Arabidopsis thaliana (Mouse-ear cress), this protein is Putative expansin-B2 (EXPB2).